Here is a 220-residue protein sequence, read N- to C-terminus: Nitrile hydratase subunit beta (220 aa).

This sequence belongs to the nitrile hydratase subunit beta family. Heterodimer of an alpha and a beta chain.

The catalysed reaction is an aliphatic primary amide = an aliphatic nitrile + H2O. NHase catalyzes the hydration of various nitrile compounds to the corresponding amides. In Pseudomonas chlororaphis (Pseudomonas aureofaciens), this protein is Nitrile hydratase subunit beta (nthB).